Consider the following 389-residue polypeptide: Cytochrome b (389 aa).

Transmembrane regions (helical) follow at residues 32–52 (FGFF…LLAM), 76–98 (WLLR…IHML), 113–133 (LWVS…LGYV), 179–199 (FFSL…LHII), 225–245 (FTIK…TFVF), 290–310 (LGVL…FLTI), 325–345 (LFWS…QPAA), and 353–373 (LYST…IYIV). Residues His-82 and His-96 each coordinate heme b. Heme b is bound by residues His-183 and His-197.

This sequence belongs to the cytochrome b family. As to quaternary structure, the main subunits of complex b-c1 are: cytochrome b, cytochrome c1 and the Rieske protein. Heme b serves as cofactor.

It is found in the mitochondrion inner membrane. In terms of biological role, component of the ubiquinol-cytochrome c reductase complex (complex III or cytochrome b-c1 complex) that is part of the mitochondrial respiratory chain. The b-c1 complex mediates electron transfer from ubiquinol to cytochrome c. Contributes to the generation of a proton gradient across the mitochondrial membrane that is then used for ATP synthesis. In Dictyostelium discoideum (Social amoeba), this protein is Cytochrome b (cytB).